A 374-amino-acid chain; its full sequence is CMP-N-acetylneuraminate-beta-1,4-galactoside alpha-2,3-sialyltransferase (374 aa).

Topologically, residues 1–8 are cytoplasmic; it reads MGLLVFVR. A helical; Signal-anchor for type II membrane protein transmembrane segment spans residues 9 to 28; that stretch reads NLLLALCLFLVLGFLYYSAW. Residues 29–374 are Lumenal-facing; sequence KLHLLQWEDS…RVITDLSSGI (346 aa). N79 and N170 each carry an N-linked (GlcNAc...) asparagine glycan. A disulfide bridge connects residues C159 and C313.

Belongs to the glycosyltransferase 29 family. As to expression, found in all tissues tested. High expression found in brain, liver, kidney, colon, heart and spleen.

The protein localises to the membrane. Its subcellular location is the golgi apparatus. It localises to the golgi stack membrane. The enzyme catalyses a beta-D-galactosyl-(1-&gt;4)-N-acetyl-beta-D-glucosaminyl derivative + CMP-N-acetyl-beta-neuraminate = an N-acetyl-alpha-neuraminyl-(2-&gt;3)-beta-D-galactosyl-(1-&gt;4)-N-acetyl-beta-D-glucosaminyl derivative + CMP + H(+). Its pathway is protein modification; protein glycosylation. In terms of biological role, catalyzes the formation of the NeuAc-alpha-2,3-Gal-beta-1,4-GlcNAc-, NeuAc-alpha-2,3-Gal-beta-1,3-GlcNAc- and NeuAc-alpha-2,3-Gal-beta-1,3-GalNAc- sequences found in terminal carbohydrate groups of glycoproteins and glycolipids. The highest activity is toward Gal-beta-1,3-GlcNAc and the lowest toward Gal-beta-1,3-GalNAc. This is CMP-N-acetylneuraminate-beta-1,4-galactoside alpha-2,3-sialyltransferase (St3gal3) from Mus musculus (Mouse).